Here is a 113-residue protein sequence, read N- to C-terminus: Cell cycle protein GpsB (113 aa).

Residues 32–71 (LDNVIKDYESFTKDNQQLSDENERLRAKVDELTKQVAVGA) adopt a coiled-coil conformation.

Belongs to the GpsB family. As to quaternary structure, forms polymers through the coiled coil domains. Interacts with PBP1, MreC and EzrA.

It localises to the cytoplasm. Its function is as follows. Divisome component that associates with the complex late in its assembly, after the Z-ring is formed, and is dependent on DivIC and PBP2B for its recruitment to the divisome. Together with EzrA, is a key component of the system that regulates PBP1 localization during cell cycle progression. Its main role could be the removal of PBP1 from the cell pole after pole maturation is completed. Also contributes to the recruitment of PBP1 to the division complex. Not essential for septum formation. The protein is Cell cycle protein GpsB of Lactiplantibacillus plantarum (strain ATCC BAA-793 / NCIMB 8826 / WCFS1) (Lactobacillus plantarum).